The chain runs to 118 residues: Ribosome-binding factor A (118 aa).

The protein belongs to the RbfA family. Monomer. Binds 30S ribosomal subunits, but not 50S ribosomal subunits or 70S ribosomes.

It is found in the cytoplasm. Functionally, one of several proteins that assist in the late maturation steps of the functional core of the 30S ribosomal subunit. Associates with free 30S ribosomal subunits (but not with 30S subunits that are part of 70S ribosomes or polysomes). Required for efficient processing of 16S rRNA. May interact with the 5'-terminal helix region of 16S rRNA. This Bacillus anthracis (strain A0248) protein is Ribosome-binding factor A.